Consider the following 657-residue polypeptide: Receptor-type tyrosine-protein phosphatase R (657 aa).

The signal sequence occupies residues 1 to 21; it reads MRRAVCFPALCLLLNLHAAGC. The Extracellular portion of the chain corresponds to 22-227; that stretch reads FSGNNDHFLA…EADKIWSKEG (206 aa). Ser23 carries O-linked (Xyl...) (chondroitin sulfate) serine glycosylation. Asn129 carries an N-linked (GlcNAc...) asparagine glycan. The chain crosses the membrane as a helical span at residues 228-248; sequence FYAVVIFLSIFVIIVTCLMIL. Residues 249-657 are Cytoplasmic-facing; that stretch reads YRLKERFQLS…ESRLSAETVQ (409 aa). Ser272 bears the Phosphoserine mark. Ser339 carries the phosphoserine; by PKA modification. In terms of domain architecture, Tyrosine-protein phosphatase spans 393-647; sequence LQSEFMEIPM…EFVHHALCLY (255 aa). Substrate is bound by residues Asp554, 588–594, and Gln632; that span reads CSAGIGR. Cys588 serves as the catalytic Phosphocysteine intermediate.

Belongs to the protein-tyrosine phosphatase family. Receptor class 7 subfamily. As to quaternary structure, interacts with MAPKs. As to expression, detected in cerebrospinal fluid (at protein level). Expressed in brain, placenta, small intestine, stomach, uterus and weakly in the prostate. Isoform alpha has been observed only in the brain. Isoform gamma is expressed in brain, placenta and uterus. Isoform delta is expressed in brain, kidney, placenta, prostate, small intestine and uterus.

The protein resides in the secreted. It localises to the cell membrane. Its subcellular location is the cytoplasm. The protein localises to the perinuclear region. It catalyses the reaction O-phospho-L-tyrosyl-[protein] + H2O = L-tyrosyl-[protein] + phosphate. Sequesters mitogen-activated protein kinases (MAPKs) such as MAPK1, MAPK3 and MAPK14 in the cytoplasm in an inactive form. The MAPKs bind to a dephosphorylated kinase interacting motif, phosphorylation of which by the protein kinase A complex releases the MAPKs for activation and translocation into the nucleus. The protein is Receptor-type tyrosine-protein phosphatase R (PTPRR) of Homo sapiens (Human).